A 522-amino-acid chain; its full sequence is Peptide methionine sulfoxide reductase MsrA/MsrB (522 aa).

A Thioredoxin domain is found at 17-174 (LALGACSPKI…ALALIRNPNA (158 aa)). Cysteine 68 and cysteine 71 are disulfide-bonded. The segment at 199 to 354 (RTIYLAGGCF…PNGYCHIDIR (156 aa)) is peptide methionine sulfoxide reductase A. The active site involves cysteine 207. The MsrB domain maps to 383-506 (DAELKRTLTE…NGASLKFIPL (124 aa)). Cysteines 440 and 495 form a disulfide. Residue cysteine 495 is the Nucleophile of the active site.

It in the N-terminal section; belongs to the thioredoxin family. The protein in the central section; belongs to the MsrA Met sulfoxide reductase family. In the C-terminal section; belongs to the MsrB Met sulfoxide reductase family.

The catalysed reaction is L-methionyl-[protein] + [thioredoxin]-disulfide + H2O = L-methionyl-(S)-S-oxide-[protein] + [thioredoxin]-dithiol. It carries out the reaction [thioredoxin]-disulfide + L-methionine + H2O = L-methionine (S)-S-oxide + [thioredoxin]-dithiol. It catalyses the reaction L-methionyl-[protein] + [thioredoxin]-disulfide + H2O = L-methionyl-(R)-S-oxide-[protein] + [thioredoxin]-dithiol. In terms of biological role, has an important function as a repair enzyme for proteins that have been inactivated by oxidation. Catalyzes the reversible oxidation-reduction of methionine sulfoxide in proteins to methionine. This is Peptide methionine sulfoxide reductase MsrA/MsrB (msrAB) from Neisseria gonorrhoeae.